We begin with the raw amino-acid sequence, 1077 residues long: RNA polymerase-associated protein CTR9 (1077 aa).

TPR repeat units lie at residues 56-89, 138-174, 183-216, 218-251, 298-332, 338-371, 373-405, 421-455, 462-495, 501-534, 540-572, 664-697, 699-731, 732-764, 768-801, and 830-863; these read KEHW…FQNS, IGNM…EDHR, CLFL…NPVL, PDPR…NPKN, PVLL…SPMI, SESS…NEDN, LAKL…NESL, FDAK…TLAT, SRAY…MEFI, LEVL…VSDK, ITLE…HPAY, GKKS…DPFN, FAAQ…LDNE, DVQL…FDNE, PHIL…AKTA, and AETL…FREL. Positions 959–980 are enriched in basic and acidic residues; the sequence is EREAMAISEHNVKDDSDLSDKD. Residues 959-1077 form a disordered region; that stretch reads EREAMAISEH…NDNDDNDGLF (119 aa). S1015 and S1017 each carry phosphoserine. 2 stretches are compositionally biased toward acidic residues: residues 1042 to 1051 and 1063 to 1077; these read FIEDSDEEEA and DNDE…DGLF.

In terms of assembly, component of the PAF1 complex which consists of at least CDC73, CTR9, LEO1, PAF1 and RTF1. Interacts with SPT6. Interacts with FACT subunits POB3 and SPT16.

It localises to the nucleus. Its subcellular location is the nucleoplasm. Its function is as follows. The PAF1 complex is a multifunctional complex. Involved in transcription initiation via genetic interactions with TATA-binding proteins. Involved in elongation. It regulates 3'-end formation of snR47 by modulating the recruitment or stable association of NRD1 and NAB3 with RNA polymerase II. Also has a role in transcription-coupled histone modification. Required for activation of RAD6 ubiquitin conjugate and the BRE1 ubiquitin ligase which ubiquitinate 'Lys-126' histone H2B. Activates the SET1 histone methyltransferase complex for methylation of 'Lys-4' of histone H3 and for methylation of 'Lys-73' of histone H3 by DOT1 and 'Lys-36' of histone H3 by SET2. In complex with PAF1, required for normal CLN1 and CLN2 G1 cyclin expression in late G1. Also has a role in chromosome segregation where it appears to be involved in microtubule placement. The protein is RNA polymerase-associated protein CTR9 (CTR9) of Saccharomyces cerevisiae (strain ATCC 204508 / S288c) (Baker's yeast).